An 858-amino-acid polypeptide reads, in one-letter code: Polyhomeotic-like protein 2 (858 aa).

Disordered regions lie at residues 1 to 76 (MENE…QYLQ), 230 to 307 (QQTP…MEGR), 337 to 388 (PQPS…VALQ), 407 to 444 (LQCP…PHTP), 473 to 493 (KEVA…SPHQ), and 529 to 561 (TDLS…KPPQ). Low complexity-rich tracts occupy residues 10 to 34 (TSSS…NSSS) and 230 to 241 (QQTPAAAASGPT). The tract at residues 33–53 (SSGGSGRPTGPQISVYSGIPD) is interaction with BMI1. Polar residues predominate over residues 265–274 (PAQSRNTAQA). A compositionally biased stretch (low complexity) spans 337 to 358 (PQPSSKHLQPQFVIQQQPQPQQ). The segment covering 379 to 388 (ASVSPSVALQ) has biased composition (polar residues). Positions 473-483 (KEVAPGEKSVP) are enriched in basic and acidic residues. A compositionally biased stretch (low complexity) spans 537 to 551 (TSGNGNSASSIAGTA). The short motif at 558–587 (KPPQAIVKPQILTHVIEGFVIQEGAEPFPV) is the HD1 element. Residues Lys598 and Lys600 each participate in a glycyl lysine isopeptide (Lys-Gly) (interchain with G-Cter in SUMO2) cross-link. At Thr619 the chain carries Phosphothreonine. Ser621 bears the Phosphoserine mark. A Glycyl lysine isopeptide (Lys-Gly) (interchain with G-Cter in SUMO2) cross-link involves residue Lys632. The FCS-type zinc-finger motif lies at 633 to 667 (EEGAPLKLKCELCGRVDFAYKFKRSKRFCSMACAK). Zn(2+) contacts are provided by Cys642, Cys645, Cys661, and Cys665. Disordered stretches follow at residues 688 to 720 (QKAG…TGTV) and 732 to 768 (HSQE…GQRD). A Glycyl lysine isopeptide (Lys-Gly) (interchain with G-Cter in SUMO2) cross-link involves residue Lys702. A Phosphoserine modification is found at Ser751. An SAM domain is found at 794–858 (WNVEDVYEFI…YARISMLKDS (65 aa)). Lys847 is covalently cross-linked (Glycyl lysine isopeptide (Lys-Gly) (interchain with G-Cter in SUMO2)).

In terms of assembly, component of a PRC1-like complex. Interacts with CBX4. Interacts with BMI1, PCGF2, PHC1 and RNF2. Interacts with CHTOP. Interacts with the N-terminal region of the SP1 transcription factor and with MAPKAPK2. Interacts with SAMD7 and SAMD11.

The protein localises to the nucleus. Component of a Polycomb group (PcG) multiprotein PRC1-like complex, a complex class required to maintain the transcriptionally repressive state of many genes, including Hox genes, throughout development. PcG PRC1 complex acts via chromatin remodeling and modification of histones; it mediates monoubiquitination of histone H2A 'Lys-119', rendering chromatin heritably changed in its expressibility. This Homo sapiens (Human) protein is Polyhomeotic-like protein 2 (PHC2).